We begin with the raw amino-acid sequence, 90 residues long: Small ribosomal subunit protein bS16 (90 aa).

The protein belongs to the bacterial ribosomal protein bS16 family.

In Streptococcus agalactiae serotype III (strain NEM316), this protein is Small ribosomal subunit protein bS16.